We begin with the raw amino-acid sequence, 73 residues long: Translation initiation factor IF-1 (73 aa).

The S1-like domain maps to 1–73 (MSEKEAGIEV…TRGRITYRDK (73 aa)).

This sequence belongs to the IF-1 family. In terms of assembly, component of the 30S ribosomal translation pre-initiation complex which assembles on the 30S ribosome in the order IF-2 and IF-3, IF-1 and N-formylmethionyl-tRNA(fMet); mRNA recruitment can occur at any time during PIC assembly.

The protein resides in the cytoplasm. In terms of biological role, one of the essential components for the initiation of protein synthesis. Stabilizes the binding of IF-2 and IF-3 on the 30S subunit to which N-formylmethionyl-tRNA(fMet) subsequently binds. Helps modulate mRNA selection, yielding the 30S pre-initiation complex (PIC). Upon addition of the 50S ribosomal subunit IF-1, IF-2 and IF-3 are released leaving the mature 70S translation initiation complex. The sequence is that of Translation initiation factor IF-1 from Anaeromyxobacter sp. (strain Fw109-5).